Consider the following 151-residue polypeptide: Small ribosomal subunit protein uS15 (151 aa).

A compositionally biased stretch (basic residues) spans 1-11 (MPHRSRHKKGR). Positions 1–24 (MPHRSRHKKGRSSSVRPPHPTVPT) are disordered.

The protein belongs to the universal ribosomal protein uS15 family. Part of the 30S ribosomal subunit.

This Pyrobaculum calidifontis (strain DSM 21063 / JCM 11548 / VA1) protein is Small ribosomal subunit protein uS15.